We begin with the raw amino-acid sequence, 730 residues long: 1,4-alpha-glucan branching enzyme GlgB (730 aa).

Residue Asp405 is the Nucleophile of the active site. Glu458 functions as the Proton donor in the catalytic mechanism.

The protein belongs to the glycosyl hydrolase 13 family. GlgB subfamily. Monomer.

The catalysed reaction is Transfers a segment of a (1-&gt;4)-alpha-D-glucan chain to a primary hydroxy group in a similar glucan chain.. It functions in the pathway glycan biosynthesis; glycogen biosynthesis. In terms of biological role, catalyzes the formation of the alpha-1,6-glucosidic linkages in glycogen by scission of a 1,4-alpha-linked oligosaccharide from growing alpha-1,4-glucan chains and the subsequent attachment of the oligosaccharide to the alpha-1,6 position. In Haemophilus influenzae (strain 86-028NP), this protein is 1,4-alpha-glucan branching enzyme GlgB.